The sequence spans 140 residues: ATP synthase epsilon chain (140 aa).

This sequence belongs to the ATPase epsilon chain family. As to quaternary structure, F-type ATPases have 2 components, CF(1) - the catalytic core - and CF(0) - the membrane proton channel. CF(1) has five subunits: alpha(3), beta(3), gamma(1), delta(1), epsilon(1). CF(0) has three main subunits: a, b and c.

Its subcellular location is the cell inner membrane. Produces ATP from ADP in the presence of a proton gradient across the membrane. This Neisseria meningitidis serogroup A / serotype 4A (strain DSM 15465 / Z2491) protein is ATP synthase epsilon chain.